Consider the following 318-residue polypeptide: Actin-related protein 2/3 complex subunit 2A (318 aa).

The segment at 297 to 318 is disordered; that stretch reads RSMNNKSFKRLGLNEVNHTNSK.

Belongs to the ARPC2 family. Component of the Arp2/3 complex composed of ARP2, ARP3, ARPC1/p41-ARC, ARPC2/p34-ARC, ARPC3/p21-ARC, ARPC4/p20-ARC and ARPC5/p16-ARC. Interacts with ARPC4. Expressed at low levels in all tissues with a relatively highest expression in inflorescences.

It localises to the cytoplasm. Its subcellular location is the cytoskeleton. It is found in the cell projection. Functions as actin-binding component of the Arp2/3 complex which is involved in regulation of actin polymerization and together with an activating nucleation-promoting factor (NPF) mediates the formation of branched actin networks. Seems to contact the mother actin filament. Arp2/3 complex plays a critical role in the control of cell morphogenesis via the modulation of cell polarity development. The chain is Actin-related protein 2/3 complex subunit 2A (ARPC2A) from Arabidopsis thaliana (Mouse-ear cress).